The primary structure comprises 640 residues: Probable potassium transport system protein Kup 2 (640 aa).

12 helical membrane passes run Leu-19–Ile-39, Val-67–Val-87, Gly-118–Thr-138, Glu-155–Val-175, Gly-181–Leu-201, Phe-230–Tyr-250, Trp-265–Leu-285, Met-307–Phe-327, Val-355–Phe-375, Ala-384–Ile-404, Ala-415–Phe-435, and Ile-437–Thr-457.

Belongs to the HAK/KUP transporter (TC 2.A.72) family.

It localises to the cell inner membrane. It catalyses the reaction K(+)(in) + H(+)(in) = K(+)(out) + H(+)(out). Transport of potassium into the cell. Likely operates as a K(+):H(+) symporter. The polypeptide is Probable potassium transport system protein Kup 2 (Syntrophobacter fumaroxidans (strain DSM 10017 / MPOB)).